Consider the following 556-residue polypeptide: Glucomannan 4-beta-mannosyltransferase 7 (556 aa).

The helical transmembrane segment at 58-78 (VVVPVFKFLVLLCLVMSVMFF) threads the bilayer. D158 is an active-site residue. Positions 217 and 219 each coordinate substrate. The active site involves D311. 4 helical membrane passes run 390–410 (IVAH…TVLF), 426–448 (LITL…WVLF), 502–522 (LLEL…IVYG), and 526–546 (LYVY…GFVG).

This sequence belongs to the glycosyltransferase 2 family. Plant cellulose synthase-like A subfamily. Ubiquitous.

It localises to the golgi apparatus membrane. The catalysed reaction is GDP-mannose + (glucomannan)n = GDP + (glucomannan)n+1.. Its function is as follows. Probable mannan synthase which consists of a 4-beta-mannosyltransferase activity on mannan using GDP-mannose. The beta-1,4-mannan product is the backbone for galactomannan synthesis by galactomannan galactosyltransferase. Galactomannan is a noncellulosic polysaccharides of plant cell wall. Required for synthesis of a cell wall polysaccharide essential for pollen tube growth, for cell wall structure, or for signaling during plant embryo development. This is Glucomannan 4-beta-mannosyltransferase 7 from Arabidopsis thaliana (Mouse-ear cress).